The following is a 570-amino-acid chain: MPINYNRNAVELKLSSQLLQWLDQRLPLGDPMRIPSIDSYKYIQDLGKGRFGTVCKFSNGNTFETVKKVDLTIFNHWTQSETKVSNRLDTFLYEFRHLHKVTNDNNRIVNFLGIYADSNQMYIMSEYLPRGSVKDLLVKETLGEDTAIKYLMETVEALDYLHNLSPPVIHRDIKAANLLITSNDSIKLANFGLVRDLAVDGFGIAIASEITLDFRATLLYVAPEVLSSALGPGNRNAYELPADIWALGCTFIEMLLKRPPHFEYFGHIDEIPKVLLGYAKSEDGKVLPYTSEVLVPSSSNCVQKIVDLVFIKSPEHRPNTHKLRIQIKKILDDDSESEEETDISHPISNSNTDSSTAISHNHSNDRKVGRAGTCLPIESMEYAAVRKELKKRSKPKSNNIMQIFVASGYYLSRILYFLNILTRSICYLLLFLSLGITALGSFLLISYFVVRFVRYLIAINCNCDLMQPQYLIISGILIVLMFALLFSCCMVALGEYKFRMANQTLDGSKFYLPRPQKSAVLCGITVITGKEDAKDTAQNMEEEIHLTPSVRRNHDDYYYDESSGPANEEN.

The Protein kinase domain maps to tyrosine 40–leucine 331. ATP-binding positions include leucine 46–valine 54 and lysine 67. The Proton acceptor role is filled by aspartate 172. The disordered stretch occupies residues glutamate 338 to glycine 369. The segment covering proline 346 to asparagine 361 has biased composition (polar residues). 3 helical membrane passes run isoleucine 400–isoleucine 420, isoleucine 425–isoleucine 445, and leucine 471–valine 491. The segment at valine 550–asparagine 570 is disordered.

The protein belongs to the protein kinase superfamily. Ser/Thr protein kinase family. As to expression, present in the intestinal cells from comma-stage embryos through the adult stage, although the intestinal expression is weaker after the L1 stage. Accumulates at the cell membrane of intestinal cells, especially the lateral membrane intervening the intestinal cells. Also detected in the muscles of the pharyngeal isthmus from the 3-fold embryonic stage, and in a pair of head neurons, which correspond to the AUA neurons, from the late L1 stage (at protein level).

Its subcellular location is the membrane. It catalyses the reaction L-seryl-[protein] + ATP = O-phospho-L-seryl-[protein] + ADP + H(+). The catalysed reaction is L-threonyl-[protein] + ATP = O-phospho-L-threonyl-[protein] + ADP + H(+). Functionally, probable serine-threonine protein kinase involved in the control of defecation rhythms. Required to increase the length of defecation cycle period. Acts in a cell-functional rather than developmental aspect in the regulation of defecation rhythms. Prevents preferential activation of the p38 MAPK pathway in response to the levels of vitamin B12 in different food types during larval development, thereby regulating the expression of cytoprotective genes, modulating life span and stress tolerance. In Caenorhabditis elegans, this protein is Serine/threonine-protein kinase flr-4 (flr-4).